The following is a 208-amino-acid chain: Protein Nef (208 aa).

Gly-2 is lipidated: N-myristoyl glycine; by host. Position 6 is a phosphoserine; by host (Ser-6). Residues 16-51 (IRERMRRTPPTPPAAEGVGAVSQDLERRGAITSSNT) form a disordered region. The segment at 65 to 68 (EEDE) is acidic; interacts with host PACS1 and PACS2; stabilizes the interaction of NEF/MHC-I with host AP1M1; necessary for MHC-I internalization. The interval 72–81 (PVRPQVPLRP) is SH3-binding; interaction with Src family tyrosine kinases. The PxxP; stabilizes the interaction of NEF/MHC-I with host AP1M1; necessary for MHC-I internalization motif lies at 75–78 (PQVP). Residues 111–127 (EILDLWVYHTQGYFPDW) form a mediates dimerization, Nef-PTE1 interaction region. A binding to ATP6V1H region spans residues 151–183 (VDPEEVEKANEGENNCLLHPMSQHGMEDEDKEV). Positions 167–168 (LL) match the Dileucine internalization motif; necessary for CD4 internalization motif. Residues 177 to 178 (ED) carry the Diacidic; necessary for CD4 internalization motif.

This sequence belongs to the lentivirus primate group Nef protein family. In terms of assembly, monomer; cytosolic form. Homodimer; membrane bound form. Interacts with Nef associated p21-activated kinase (PAK2); this interaction activates PAK2. Associates with the Nef-MHC-I-AP1 complex; this complex is required for MHC-I internalization. Interacts (via C-terminus) with host PI3-kinase. Interacts with host PACS1; this interaction seems to be weak. Interacts with host PACS2. Interacts with host LCK and MAPK3; these interactions inhibit the kinase activity of the latter. Interacts with host ATP6V1H; this interaction may play a role in CD4 endocytosis. Associates with the CD4-Nef-AP2 complex; this complex is required for CD4 internalization. Interacts with host AP2 subunit alpha and AP2 subunit sigma2. Interacts with TCR-zeta chain; this interaction up-regulates the Fas ligand (FasL) surface expression. Interacts with host HCK, LYN, and SRC; these interactions activate the Src family kinases. Interacts with MAP3K5; this interaction inhibits the Fas and TNFR-mediated death signals. Interacts with beta-COP and PTE1. Interacts with human RACK1; this increases Nef phosphorylation by PKC. Interacts with TP53; this interaction decreases the half-life of TP53, protecting the infected cell against p53-mediated apoptosis. Post-translationally, the virion-associated Nef proteins are cleaved by the viral protease to release the soluble C-terminal core protein. Nef is probably cleaved concomitantly with viral structural proteins on maturation of virus particles. In terms of processing, myristoylated. Phosphorylated on serine residues, probably by host PKCdelta and theta.

It localises to the host cell membrane. It is found in the virion. The protein resides in the secreted. Its subcellular location is the host Golgi apparatus membrane. In terms of biological role, factor of infectivity and pathogenicity, required for optimal virus replication. Alters numerous pathways of T-lymphocyte function and down-regulates immunity surface molecules in order to evade host defense and increase viral infectivity. Alters the functionality of other immunity cells, like dendritic cells, monocytes/macrophages and NK cells. Functionally, in infected CD4(+) T-lymphocytes, down-regulates the surface MHC-I, mature MHC-II, CD4, CD28, CCR5 and CXCR4 molecules. Mediates internalization and degradation of host CD4 through the interaction of with the cytoplasmic tail of CD4, the recruitment of AP-2 (clathrin adapter protein complex 2), internalization through clathrin coated pits, and subsequent transport to endosomes and lysosomes for degradation. Diverts host MHC-I molecules to the trans-Golgi network-associated endosomal compartments by an endocytic pathway to finally target them for degradation. MHC-I down-regulation may involve AP-1 (clathrin adapter protein complex 1) or possibly Src family kinase-ZAP70/Syk-PI3K cascade recruited by PACS2. In consequence infected cells are masked for immune recognition by cytotoxic T-lymphocytes. Decreasing the number of immune receptors also prevents reinfection by more HIV particles (superinfection). Down-regulates host SERINC3 and SERINC5 thereby excluding these proteins from the viral particles. Virion infectivity is drastically higher when SERINC3 or SERINC5 are excluded from the viral envelope, because these host antiviral proteins impair the membrane fusion event necessary for subsequent virion penetration. Bypasses host T-cell signaling by inducing a transcriptional program nearly identical to that of anti-CD3 cell activation. Interaction with TCR-zeta chain up-regulates the Fas ligand (FasL). Increasing surface FasL molecules and decreasing surface MHC-I molecules on infected CD4(+) cells send attacking cytotoxic CD8+ T-lymphocytes into apoptosis. Its function is as follows. Plays a role in optimizing the host cell environment for viral replication without causing cell death by apoptosis. Protects the infected cells from apoptosis in order to keep them alive until the next virus generation is ready to strike. Inhibits the Fas and TNFR-mediated death signals by blocking MAP3K5/ASK1. Decreases the half-life of TP53, protecting the infected cell against p53-mediated apoptosis. Inhibits the apoptotic signals regulated by the Bcl-2 family proteins through the formation of a Nef/PI3-kinase/PAK2 complex that leads to activation of PAK2 and induces phosphorylation of host BAD. In terms of biological role, extracellular Nef protein targets CD4(+) T-lymphocytes for apoptosis by interacting with CXCR4 surface receptors. In Human immunodeficiency virus type 1 group M subtype F1 (isolate 93BR020) (HIV-1), this protein is Protein Nef.